The primary structure comprises 271 residues: Putative pyruvate, phosphate dikinase regulatory protein (271 aa).

153 to 160 is an ADP binding site; that stretch reads GVSRTSKT.

The protein belongs to the pyruvate, phosphate/water dikinase regulatory protein family. PDRP subfamily.

It catalyses the reaction N(tele)-phospho-L-histidyl/L-threonyl-[pyruvate, phosphate dikinase] + ADP = N(tele)-phospho-L-histidyl/O-phospho-L-threonyl-[pyruvate, phosphate dikinase] + AMP + H(+). The enzyme catalyses N(tele)-phospho-L-histidyl/O-phospho-L-threonyl-[pyruvate, phosphate dikinase] + phosphate + H(+) = N(tele)-phospho-L-histidyl/L-threonyl-[pyruvate, phosphate dikinase] + diphosphate. In terms of biological role, bifunctional serine/threonine kinase and phosphorylase involved in the regulation of the pyruvate, phosphate dikinase (PPDK) by catalyzing its phosphorylation/dephosphorylation. This Shouchella clausii (strain KSM-K16) (Alkalihalobacillus clausii) protein is Putative pyruvate, phosphate dikinase regulatory protein.